Here is a 363-residue protein sequence, read N- to C-terminus: Aminomethyltransferase (363 aa).

This sequence belongs to the GcvT family. As to quaternary structure, the glycine cleavage system is composed of four proteins: P, T, L and H.

The enzyme catalyses N(6)-[(R)-S(8)-aminomethyldihydrolipoyl]-L-lysyl-[protein] + (6S)-5,6,7,8-tetrahydrofolate = N(6)-[(R)-dihydrolipoyl]-L-lysyl-[protein] + (6R)-5,10-methylene-5,6,7,8-tetrahydrofolate + NH4(+). In terms of biological role, the glycine cleavage system catalyzes the degradation of glycine. The chain is Aminomethyltransferase from Thioalkalivibrio sulfidiphilus (strain HL-EbGR7).